We begin with the raw amino-acid sequence, 466 residues long: MPHSYDYDAIVIGSGPGGEGAAMGLVKQGARVAVIERYQNVGGGCTHWGTIPSKALRHAVSRIIEFNQNPLYSDHSRLLRSSFADILNHADNVINQQTRMRQGFYERNHCEILQGNARFVDEHTLALDCPDGSVETLTAEKFVIACGSRPYHPTDVDFPHPRIYDSDSILSMHHEPRHVLIYGAGVIGCEYASIFRGMDVKVDLINTRDRLLAFLDQEMSDSLSYHFWNSGVVIRHNEEYEKIEGCDDGVIMHLKSGKKLKADCLLYANGRTGNTDSLALQNIGLETDSRGQLKVNSMYQTAQPHVYAVGDVIGYPSLASAAYDQGRIAAQALVKGEATAHLIEDIPTGIYTIPEISSVGKTEQQLTAMKVPYEVGRAQFKHLARAQIVGMNVGTLKILFHRETKEILGIHCFGERAAEIIHIGQAIMEQKGGGNTIEYFVNTTFNYPTMAEAYRVAALNGLNRLF.

36–45 (ERYQNVGGGC) is an FAD binding site.

This sequence belongs to the class-I pyridine nucleotide-disulfide oxidoreductase family. It depends on FAD as a cofactor.

The protein localises to the cytoplasm. It carries out the reaction NAD(+) + NADPH = NADH + NADP(+). Its function is as follows. Conversion of NADPH, generated by peripheral catabolic pathways, to NADH, which can enter the respiratory chain for energy generation. The polypeptide is Soluble pyridine nucleotide transhydrogenase (Escherichia coli O127:H6 (strain E2348/69 / EPEC)).